We begin with the raw amino-acid sequence, 1369 residues long: Probable tegument protein antigen 3 (1369 aa).

The interval 1347-1369 is disordered; that stretch reads DRRGAVPHDNPQYIPMDAMDPSQ.

The protein localises to the virion tegument. The protein is Probable tegument protein antigen 3 (3) of Connochaetes taurinus (Blue wildebeest).